The following is a 248-amino-acid chain: Granulin (248 aa).

It belongs to the polyhedrin family.

Component of the virus occlusion bodies, which are large proteinaceous structures, that protect the virus from the outside environment for extended periods until they are ingested by insect larvae. The polypeptide is Granulin (Cydia pomonella (Codling moth)).